A 148-amino-acid polypeptide reads, in one-letter code: UPF0756 membrane protein YeaL (148 aa).

The next 4 membrane-spanning stretches (helical) occupy residues 14–34 (ALGF…LIIV), 51–71 (LSIG…SGTL), 86–106 (LVAI…VTLM), and 121–141 (VLGV…AGLV).

It belongs to the UPF0756 family.

It localises to the cell membrane. This Escherichia coli (strain B / REL606) protein is UPF0756 membrane protein YeaL.